The sequence spans 344 residues: Biotin synthase (344 aa).

The region spanning 65 to 290 (PEVEVEGIIS…RTMLRFAGGR (226 aa)) is the Radical SAM core domain. Positions 80, 84, and 87 each coordinate [4Fe-4S] cluster. Cys-123, Cys-156, Cys-215, and Arg-285 together coordinate [2Fe-2S] cluster.

Belongs to the radical SAM superfamily. Biotin synthase family. Homodimer. [4Fe-4S] cluster is required as a cofactor. [2Fe-2S] cluster serves as cofactor.

It carries out the reaction (4R,5S)-dethiobiotin + (sulfur carrier)-SH + 2 reduced [2Fe-2S]-[ferredoxin] + 2 S-adenosyl-L-methionine = (sulfur carrier)-H + biotin + 2 5'-deoxyadenosine + 2 L-methionine + 2 oxidized [2Fe-2S]-[ferredoxin]. Its pathway is cofactor biosynthesis; biotin biosynthesis; biotin from 7,8-diaminononanoate: step 2/2. Functionally, catalyzes the conversion of dethiobiotin (DTB) to biotin by the insertion of a sulfur atom into dethiobiotin via a radical-based mechanism. The polypeptide is Biotin synthase (Mycolicibacterium paratuberculosis (strain ATCC BAA-968 / K-10) (Mycobacterium paratuberculosis)).